The sequence spans 465 residues: Mitochondrial-processing peptidase subunit beta (465 aa).

A Zn(2+)-binding site is contributed by His-79. The active-site Proton acceptor is Glu-82. 2 residues coordinate Zn(2+): His-83 and Glu-159.

The protein belongs to the peptidase M16 family. In terms of assembly, heterodimer of an alpha subunit and a beta subunit subunits, forming the mitochondrial processing protease (MPP) in which the alpha subunit is involved in substrate recognition and binding and the beta subunit is the catalytic subunit. Zn(2+) serves as cofactor.

It localises to the mitochondrion matrix. It catalyses the reaction Release of N-terminal transit peptides from precursor proteins imported into the mitochondrion, typically with Arg in position P2.. Binding to the alpha subunit is required for catalytic activity. Functionally, catalytic subunit of the essential mitochondrial processing protease (MPP), which cleaves the mitochondrial sequence off newly imported precursors proteins. Preferentially, cleaves after an arginine at position P2. This chain is Mitochondrial-processing peptidase subunit beta (MPP1), found in Blastocladiella emersonii (Aquatic fungus).